Reading from the N-terminus, the 339-residue chain is Protein RecA (339 aa).

74–81 (GPESSGKT) is an ATP binding site.

This sequence belongs to the RecA family.

The protein resides in the cytoplasm. Its function is as follows. Can catalyze the hydrolysis of ATP in the presence of single-stranded DNA, the ATP-dependent uptake of single-stranded DNA by duplex DNA, and the ATP-dependent hybridization of homologous single-stranded DNAs. It interacts with LexA causing its activation and leading to its autocatalytic cleavage. This chain is Protein RecA, found in Phytoplasma mali (strain AT).